We begin with the raw amino-acid sequence, 394 residues long: Probable nucleoredoxin 2 (394 aa).

2 consecutive Thioredoxin domains span residues 15–176 (GVGG…QTLE) and 180–327 (SVSG…EMED).

Belongs to the nucleoredoxin family.

It catalyses the reaction [protein]-dithiol + NAD(+) = [protein]-disulfide + NADH + H(+). The catalysed reaction is [protein]-dithiol + NADP(+) = [protein]-disulfide + NADPH + H(+). Its function is as follows. Probable thiol-disulfide oxidoreductase that may participate in various redox reactions. The chain is Probable nucleoredoxin 2 from Oryza sativa subsp. japonica (Rice).